Here is a 202-residue protein sequence, read N- to C-terminus: ATP-dependent Clp protease proteolytic subunit (202 aa).

S106 (nucleophile) is an active-site residue. H131 is a catalytic residue.

The protein belongs to the peptidase S14 family. As to quaternary structure, fourteen ClpP subunits assemble into 2 heptameric rings which stack back to back to give a disk-like structure with a central cavity, resembling the structure of eukaryotic proteasomes.

Its subcellular location is the cytoplasm. It carries out the reaction Hydrolysis of proteins to small peptides in the presence of ATP and magnesium. alpha-casein is the usual test substrate. In the absence of ATP, only oligopeptides shorter than five residues are hydrolyzed (such as succinyl-Leu-Tyr-|-NHMec, and Leu-Tyr-Leu-|-Tyr-Trp, in which cleavage of the -Tyr-|-Leu- and -Tyr-|-Trp bonds also occurs).. Functionally, cleaves peptides in various proteins in a process that requires ATP hydrolysis. Has a chymotrypsin-like activity. Plays a major role in the degradation of misfolded proteins. The polypeptide is ATP-dependent Clp protease proteolytic subunit (Shewanella oneidensis (strain ATCC 700550 / JCM 31522 / CIP 106686 / LMG 19005 / NCIMB 14063 / MR-1)).